The primary structure comprises 489 residues: Sphingolipid C9-methyltransferase (489 aa).

2 consecutive transmembrane segments (helical) span residues 29–49 and 59–79; these read GAKN…PLFV and TFIF…WTVL. S-adenosyl-L-methionine contacts are provided by residues 202 to 203, 239 to 247, 265 to 270, and 295 to 296; these read YT, LLDLGCGWG, TLGKNQ, and YR.

It belongs to the CFA/CMAS family.

Its subcellular location is the membrane. The catalysed reaction is a (4E,8E)-4-sphinga-4,8-dienine ceramide + S-adenosyl-L-methionine = a 9-methyl-(4E,8E)-sphinga-4,8-dienine ceramide + S-adenosyl-L-homocysteine + H(+). The protein operates within lipid metabolism; sphingolipid metabolism. In terms of biological role, catalyzes methylation of the sphingoid base component of glucosylceramides (GluCers) at the C9-position. Sphingolipid C9-methylation requires 4,8-desaturated ceramides as substrates. Glucosylceramides play important roles in growth, differentiation and pathogenicity. The methyl group at the C9-position distinguishes fungal glucosylceramides from those of plants and animals, and may thus play a role in host-pathogen interactions enabling the host to recognize the fungal attack and initiate specific defense responses. In Komagataella phaffii (strain GS115 / ATCC 20864) (Yeast), this protein is Sphingolipid C9-methyltransferase.